The sequence spans 360 residues: G-protein coupled receptor 183 (360 aa).

Topologically, residues 1–30 (MDIKMDNFTTPSAASLESDCDLYAHHHTAR) are extracellular. N-linked (GlcNAc...) asparagine glycosylation occurs at N7. Residues 31–56 (ILMPLHYSIVFIIGLVGNLLALIVII) traverse the membrane as a helical segment. Topologically, residues 57-76 (QNRKKINSTTLYSTNLVISD) are cytoplasmic. The helical transmembrane segment at 77–94 (ILFTTALPTRIAYYALGF) threads the bilayer. R86 contributes to the 7alpha,25-dihydroxycholesterol binding site. Residues 95-104 (DWRIGDALCR) lie on the Extracellular side of the membrane. An intrachain disulfide couples C103 to C180. Residues 105-126 (ITALVFYINTYAGVNFMTCLSI) form a helical membrane-spanning segment. Residues Y111 and Y115 each coordinate 7alpha,25-dihydroxycholesterol. The interval 125–133 (SIDRFFAVV) is interaction with G proteins. The Cytoplasmic segment spans residues 127-148 (DRFFAVVHPLRYNKIKRIEHAK). The chain crosses the membrane as a helical span at residues 149–167 (CICIFVWILVFGQTLPLLI). Topologically, residues 168–191 (NPMSKQEAERTTCMEYPNFEETKS) are extracellular. A helical transmembrane segment spans residues 192-214 (LPWILLGACFIGYVLPLVIILIC). Residues 215 to 240 (YSQICCKLFKTAKQNPLTEKSGVNKK) are Cytoplasmic-facing. Residues 241–264 (ALNTIIFIIVVFVVCFTPYHVAII) traverse the membrane as a helical segment. Y259 provides a ligand contact to 7alpha,25-dihydroxycholesterol. Topologically, residues 265 to 286 (QHMIKKLRLPGLLECSQRHSFQ) are extracellular. A helical membrane pass occupies residues 287–311 (ISLHFTVCLMNFNCCMDPFIYFFAC). Over 312-360 (KGYKRKVMKMLKRQVSVSISSAVRSAPEENSREMTETQMMIHSKSLNGK) the chain is Cytoplasmic. A Phosphoserine modification is found at S327. The interval 339-360 (EENSREMTETQMMIHSKSLNGK) is disordered. Polar residues predominate over residues 347 to 360 (ETQMMIHSKSLNGK).

This sequence belongs to the G-protein coupled receptor 1 family. In terms of assembly, homodimer and heterodimer. Heterodimerizes with CXCR5; leading to modulate the interaction between of CXCL13 and CXCR5.

The protein localises to the cell membrane. Its function is as follows. G-protein coupled receptor expressed in lymphocytes that acts as a chemotactic receptor for B-cells, T-cells, splenic dendritic cells, monocytes/macrophages and astrocytes. Receptor for oxysterol 7-alpha,25-dihydroxycholesterol (7-alpha,25-OHC) and other related oxysterols. Mediates cell positioning and movement of a number of cells by binding the 7-alpha,25-OHC ligand that forms a chemotactic gradient. Binding of 7-alpha,25-OHC mediates the correct localization of B-cells during humoral immune responses. Guides B-cell movement along the B-cell zone-T-cell zone boundary and later to interfollicular and outer follicular regions. Its specific expression during B-cell maturation helps position B-cells appropriately for mounting T-dependent antibody responses. Collaborates with CXCR5 to mediate B-cell migration; probably by forming a heterodimer with CXCR5 that affects the interaction between of CXCL13 and CXCR5. Also acts as a chemotactic receptor for some T-cells upon binding to 7-alpha,25-OHC ligand. Promotes follicular helper T (Tfh) cells differentiation by positioning activated T-cells at the follicle-T-zone interface, promoting contact of newly activated CD4 T-cells with activated dendritic cells and exposing them to Tfh-cell-promoting inducible costimulator (ICOS) ligand. Expression in splenic dendritic cells is required for their homeostasis, localization and ability to induce B- and T-cell responses: GPR183 acts as a chemotactic receptor in dendritic cells that mediates the accumulation of CD4(+) dendritic cells in bridging channels. Regulates migration of astrocytes and is involved in communication between astrocytes and macrophages. Promotes osteoclast precursor migration to bone surfaces. Signals constitutively through G(i)-alpha, but not G(s)-alpha or G(q)-alpha. Signals constitutively also via MAPK1/3 (ERK1/2). This chain is G-protein coupled receptor 183 (GPR183), found in Bos taurus (Bovine).